The following is a 646-amino-acid chain: Type I inositol polyphosphate 5-phosphatase 2 (646 aa).

Over residues 59–74 the composition is skewed to basic and acidic residues; sequence TDEDSHNGRRGSEADH. Disordered stretches follow at residues 59–99, 185–207, and 329–369; these read TDED…GKSE, ESVY…SAPS, and IDNR…IRNS. Residues 188 to 207 show a composition bias toward polar residues; the sequence is YDQSPSCNNNALHRSHSAPS. A compositionally biased stretch (basic and acidic residues) spans 341-350; sequence EAAKIMHDDS. 2 catalytic regions span residues 495–510 and 575–590; these read DQVF…LNMS and KKRA…WLGK.

It belongs to the inositol polyphosphate 5-phosphatase family. As to expression, expressed ubiquitously.

It catalyses the reaction 1D-myo-inositol 1,4,5-trisphosphate + H2O = 1D-myo-inositol 1,4-bisphosphate + phosphate. The catalysed reaction is 1D-myo-inositol 1,3,4,5-tetrakisphosphate + H2O = 1D-myo-inositol 1,3,4-trisphosphate + phosphate. Its function is as follows. Has phosphatase activity toward Ins(1,4,5)P3 and Ins(1,3,4,5)P4. Seems to be involved in the abscisic acid (ABA) signaling pathway. Could also be able to hydrolyze PtdIns(4,5)P2 and PtdIns(3,4,5)P3. This is Type I inositol polyphosphate 5-phosphatase 2 from Arabidopsis thaliana (Mouse-ear cress).